The following is a 464-amino-acid chain: Putative protein TIC 214 C-terminal part (464 aa).

Belongs to the TIC214 family. As to quaternary structure, part of the Tic complex.

The protein localises to the plastid. It is found in the chloroplast. In terms of biological role, involved in protein precursor import into chloroplasts. May be part of an intermediate translocation complex acting as a protein-conducting channel at the inner envelope. This chain is Putative protein TIC 214 C-terminal part, found in Marchantia polymorpha (Common liverwort).